The following is a 447-amino-acid chain: ATP-dependent protease ATPase subunit HslU (447 aa).

ATP contacts are provided by residues Ile-17, 59–64, Asp-256, Glu-321, and Arg-393; that span reads GVGKTE.

It belongs to the ClpX chaperone family. HslU subfamily. As to quaternary structure, a double ring-shaped homohexamer of HslV is capped on each side by a ring-shaped HslU homohexamer. The assembly of the HslU/HslV complex is dependent on binding of ATP.

It is found in the cytoplasm. In terms of biological role, ATPase subunit of a proteasome-like degradation complex; this subunit has chaperone activity. The binding of ATP and its subsequent hydrolysis by HslU are essential for unfolding of protein substrates subsequently hydrolyzed by HslV. HslU recognizes the N-terminal part of its protein substrates and unfolds these before they are guided to HslV for hydrolysis. The polypeptide is ATP-dependent protease ATPase subunit HslU (Pseudomonas putida (strain W619)).